The following is a 553-amino-acid chain: MSSLINHAMSGLNAAQAALNTVSNNINNYNVAGYTRQTTILAQANSTLGAGGWIGNGVYVSGVQREYDAFITNQLRGAQNQSSGLTTRYEQMSKIDNLLADKSSSLSGSLQSFFTSLQTLVSNAEDPAARQALIGKAEGLVNQFKTTDQYLRDQDKQVNIAIGSSVAQINNYAKQIANLNDQISRMTGVGAGASPNDLLDQRDQLVSELNKIVGVEVSVQDGGTYNLTMANGYTLVQGSTARQLAAVPSSADPTRTTVAYVDEAAGNIEIPEKLLNTGSLGGLLTFRSQDLDQTRNTLGQLALAFADAFNAQHTKGYDADGNKGKDFFSIGSPVVYSNSNNADKTVSLTAKVVDSTKVQATDYKIVFDGTDWQVTRTADNTTFTATKDADGKLEIDGLKVTVGTGAQKNDSFLLKPVSNAIVDMNVKVTNEAEIAMASESKLDPDVDTGDSDNRNGQALLDLQNSNVVGGNKTFNDAYATLVSDVGNKTSTLKTSSTTQANVVKQLYKQQQSVSGVNLDEEYGNLQRYQQYYLANAQVLQTANALFDALLNIR.

It belongs to the flagella basal body rod proteins family.

It is found in the secreted. It localises to the bacterial flagellum. The protein is Flagellar hook-associated protein 1 (flgK) of Salmonella typhi.